The sequence spans 448 residues: Probable glycine dehydrogenase (decarboxylating) subunit 1 (448 aa).

The protein belongs to the GcvP family. N-terminal subunit subfamily. In terms of assembly, the glycine cleavage system is composed of four proteins: P, T, L and H. In this organism, the P 'protein' is a heterodimer of two subunits.

The enzyme catalyses N(6)-[(R)-lipoyl]-L-lysyl-[glycine-cleavage complex H protein] + glycine + H(+) = N(6)-[(R)-S(8)-aminomethyldihydrolipoyl]-L-lysyl-[glycine-cleavage complex H protein] + CO2. The glycine cleavage system catalyzes the degradation of glycine. The P protein binds the alpha-amino group of glycine through its pyridoxal phosphate cofactor; CO(2) is released and the remaining methylamine moiety is then transferred to the lipoamide cofactor of the H protein. The polypeptide is Probable glycine dehydrogenase (decarboxylating) subunit 1 (Staphylococcus carnosus (strain TM300)).